Reading from the N-terminus, the 474-residue chain is tRNA-2-methylthio-N(6)-dimethylallyladenosine synthase (474 aa).

The 118-residue stretch at 3–120 (KKLHIKTWGC…LPEMIEQVRR (118 aa)) folds into the MTTase N-terminal domain. [4Fe-4S] cluster-binding residues include cysteine 12, cysteine 49, cysteine 83, cysteine 157, cysteine 161, and cysteine 164. The 233-residue stretch at 143–375 (RAEGPTAFVS…QDRITQQAMR (233 aa)) folds into the Radical SAM core domain. The TRAM domain occupies 378–441 (RHMMGTVQRI…TNSLRGKFIR (64 aa)).

It belongs to the methylthiotransferase family. MiaB subfamily. Monomer. It depends on [4Fe-4S] cluster as a cofactor.

The protein localises to the cytoplasm. The catalysed reaction is N(6)-dimethylallyladenosine(37) in tRNA + (sulfur carrier)-SH + AH2 + 2 S-adenosyl-L-methionine = 2-methylsulfanyl-N(6)-dimethylallyladenosine(37) in tRNA + (sulfur carrier)-H + 5'-deoxyadenosine + L-methionine + A + S-adenosyl-L-homocysteine + 2 H(+). Catalyzes the methylthiolation of N6-(dimethylallyl)adenosine (i(6)A), leading to the formation of 2-methylthio-N6-(dimethylallyl)adenosine (ms(2)i(6)A) at position 37 in tRNAs that read codons beginning with uridine. This is tRNA-2-methylthio-N(6)-dimethylallyladenosine synthase from Shewanella oneidensis (strain ATCC 700550 / JCM 31522 / CIP 106686 / LMG 19005 / NCIMB 14063 / MR-1).